A 1085-amino-acid polypeptide reads, in one-letter code: Ankyrin repeat and IBR domain-containing protein 1 (1085 aa).

Gly-2 carries the N-myristoyl glycine lipid modification. ANK repeat units follow at residues 45–75 (QHNT…NPNK) and 145–174 (KKNT…DLFA). A disordered region spans residues 282-322 (CQRSGVQMPTPPPSGYNAWDTLPSPRTPRTTRSSVTSPDEI). The span at 304–319 (PSPRTPRTTRSSVTSP) shows a compositional bias: low complexity. The TRIAD supradomain stretch occupies residues 330–570 (DTSLCDICMC…GGYYRCTRYE (241 aa)). The Zn(2+) site is built by Cys-334, Cys-337, Cys-352, His-354, Cys-357, Cys-360, Cys-379, Cys-384, Cys-466, Cys-469, His-474, Cys-479, Cys-520, and Cys-523. The segment at 334-384 (CDICMCSISVFEDPVDMPCGHDFCRGCWEAFLNLKIQEGEAHNIFCPAYEC) adopts an RING-type 1 zinc-finger fold. The IBR-type zinc finger occupies 402 to 479 (DKRYLQFDIK…LGEAHEPCDC (78 aa)). The RING-type 2; atypical zinc finger occupies 520–549 (CANCKSPIQKNEGCNHMQCAKCKYDFCWIC). Cys-533 is a catalytic residue. 6 residues coordinate Zn(2+): Cys-538, Cys-541, Cys-546, Cys-549, His-556, and Cys-566. Positions 576–641 (EEQSKEMTVE…RALKETEGGC (66 aa)) form a coiled coil. The residue at position 738 (Ser-738) is a Phosphoserine. The tract at residues 764–808 (RRRHRQQRRRGDVHSLLSNPTDLDEPSESTFDLPEGSSGRRPGAS) is disordered. A UIM domain is found at 846 to 865 (EDDPNILLAIQLSLQESGLD). Residues Ser-879 and Ser-906 each carry the phosphoserine modification. Disordered regions lie at residues 884-907 (GSSL…ALSS), 921-959 (GADS…QDPS), and 1014-1085 (PPED…VHSV). Residues 926-959 (PFSTDTLSSRPLSETRSDFCPSSSDLDSAGQDPS) show a composition bias toward polar residues. Residues 1018–1033 (SVSKDTGVHEGERAQM) are compositionally biased toward basic and acidic residues. Polar residues predominate over residues 1068 to 1085 (ASQTPQTSSDWLEQVHSV).

It belongs to the RBR family.

It catalyses the reaction [E2 ubiquitin-conjugating enzyme]-S-ubiquitinyl-L-cysteine + [acceptor protein]-L-lysine = [E2 ubiquitin-conjugating enzyme]-L-cysteine + [acceptor protein]-N(6)-ubiquitinyl-L-lysine.. In terms of biological role, might act as an E3 ubiquitin-protein ligase, or as part of E3 complex, which accepts ubiquitin from specific E2 ubiquitin-conjugating enzymes and then transfers it to substrates. This chain is Ankyrin repeat and IBR domain-containing protein 1 (Ankib1), found in Mus musculus (Mouse).